The chain runs to 559 residues: Paxillin (559 aa).

The short motif at 3-15 (DLDALLADLESTT) is the LD motif 1 element. Residues 17–139 (HISKRPVFLT…SPTMTSTSLG (123 aa)) form a disordered region. Tyrosine 31 carries the post-translational modification Phosphotyrosine. The segment covering 45–54 (VPPPVPPPPS) has biased composition (pro residues). Residues 79–98 (QQPQSQSPIYSSSAKSSSAS) are compositionally biased toward low complexity. Tyrosine 118 is modified (phosphotyrosine; by FAK1). Over residues 121-137 (PNKQKSAEPSPTMTSTS) the composition is skewed to polar residues. The LD motif 2 signature appears at 144-156 (ELDRLLLELNAVQ). 2 disordered regions span residues 158–213 (NPPS…GIED) and 225–262 (LESS…SASS). The LD motif 3 motif lies at 217–229 (SVESLLDELESSV). A compositionally biased stretch (polar residues) spans 237-262 (TVSQGEVSSPQRVNASQQQTRISASS). The tract at residues 263–282 (ATRELDELMASLSDFKFMAQ) is required for binding to PARVA and ILK. 2 consecutive short sequence motifs (LD motif) follow at residues 266 to 277 (ELDELMASLSDF) and 301 to 313 (QLDT…QSDL). The interval 281–301 (AQGKAGGSSSPPSTTPKPGSQ) is disordered. LIM zinc-binding domains lie at 326 to 376 (CGAC…CEKD), 385 to 435 (CYYC…CRKD), 444 to 494 (CGGC…CEVH), and 503 to 553 (CSGC…CQNC).

In terms of assembly, interacts (via LD motif 4) with PARVA/PARVIN and ILK. Phosphorylated on tyrosine residues during integrin-mediated cell adhesion, embryonic development, fibroblast transformation and following stimulation of cells by mitogens.

The protein resides in the cytoplasm. The protein localises to the cytoskeleton. It is found in the cell junction. It localises to the focal adhesion. Its subcellular location is the cell cortex. Functionally, cytoskeletal protein involved in actin-membrane attachment at sites of cell adhesion to the extracellular matrix (focal adhesion). Binds in vitro to vinculin as well as to the SH3 domain of c-SRC and, when tyrosine phosphorylated, to the SH2 domain of v-CRK. In Gallus gallus (Chicken), this protein is Paxillin (PXN).